A 104-amino-acid chain; its full sequence is Large ribosomal subunit protein uL23 (104 aa).

The protein belongs to the universal ribosomal protein uL23 family. In terms of assembly, part of the 50S ribosomal subunit. Contacts protein L29, and trigger factor when it is bound to the ribosome.

Functionally, one of the early assembly proteins it binds 23S rRNA. One of the proteins that surrounds the polypeptide exit tunnel on the outside of the ribosome. Forms the main docking site for trigger factor binding to the ribosome. This is Large ribosomal subunit protein uL23 from Trichormus variabilis (strain ATCC 29413 / PCC 7937) (Anabaena variabilis).